We begin with the raw amino-acid sequence, 146 residues long: Large ribosomal subunit protein uL15 (146 aa).

The tract at residues 1–54 is disordered; it reads MTIKLHDLRPAPGSKTPRTRVGRGEGSKGKTAGRGTKGTKARKQVPTTFEGGQM.

Belongs to the universal ribosomal protein uL15 family. Part of the 50S ribosomal subunit.

Functionally, binds to the 23S rRNA. In Mycobacterium ulcerans (strain Agy99), this protein is Large ribosomal subunit protein uL15.